The following is a 167-amino-acid chain: Regulator of sigma D (167 aa).

Belongs to the Rsd/AlgQ family. As to quaternary structure, interacts with RpoD.

It is found in the cytoplasm. In terms of biological role, binds RpoD and negatively regulates RpoD-mediated transcription activation by preventing the interaction between the primary sigma factor RpoD with the catalytic core of the RNA polymerase and with promoter DNA. May be involved in replacement of the RNA polymerase sigma subunit from RpoD to RpoS during the transition from exponential growth to the stationary phase. The polypeptide is Regulator of sigma D (Yersinia enterocolitica serotype O:8 / biotype 1B (strain NCTC 13174 / 8081)).